Consider the following 311-residue polypeptide: tRNA dimethylallyltransferase (311 aa).

Residue 12-19 (GPTASGKT) participates in ATP binding. 14-19 (TASGKT) is a binding site for substrate. Interaction with substrate tRNA regions lie at residues 37–40 (DSAM) and 161–165 (QRIQR).

This sequence belongs to the IPP transferase family. Monomer. It depends on Mg(2+) as a cofactor.

The catalysed reaction is adenosine(37) in tRNA + dimethylallyl diphosphate = N(6)-dimethylallyladenosine(37) in tRNA + diphosphate. In terms of biological role, catalyzes the transfer of a dimethylallyl group onto the adenine at position 37 in tRNAs that read codons beginning with uridine, leading to the formation of N6-(dimethylallyl)adenosine (i(6)A). This Coxiella burnetii (strain Dugway 5J108-111) protein is tRNA dimethylallyltransferase.